The sequence spans 494 residues: tRNA (guanine(37)-N(1))-methyltransferase (494 aa).

The N-terminal 32 residues, 1–32, are a transit peptide targeting the mitochondrion; sequence MRIRRILYFYGNLPNTYTANVLRRLAFSCWHT. Residues histidine 278, 316–317, 344–345, and asparagine 377 each bind S-adenosyl-L-methionine; these read DL and DG. The disordered stretch occupies residues 468–494; it reads DTGEPESKRPRTAEAFPLPHVQQSRNS.

The protein belongs to the class I-like SAM-binding methyltransferase superfamily. TRM5/TYW2 family. Monomer.

The protein resides in the mitochondrion matrix. It is found in the nucleus. It localises to the cytoplasm. It carries out the reaction guanosine(37) in tRNA + S-adenosyl-L-methionine = N(1)-methylguanosine(37) in tRNA + S-adenosyl-L-homocysteine + H(+). Functionally, involved in mitochondrial tRNA methylation. Specifically methylates the N1 position of guanosine-37 in various tRNAs. Methylation is not dependent on the nature of the nucleoside 5' of the target nucleoside. This is the first step in the biosynthesis of wybutosine (yW), a modified base adjacent to the anticodon of tRNAs and required for accurate decoding. This Xenopus tropicalis (Western clawed frog) protein is tRNA (guanine(37)-N(1))-methyltransferase (trmt5).